The following is a 358-amino-acid chain: Methionine aminopeptidase 2 (358 aa).

A substrate-binding site is contributed by His-111. Residues Asp-131, Asp-142, and His-211 each contribute to the a divalent metal cation site. His-219 is a binding site for substrate. The a divalent metal cation site is built by Glu-244 and Glu-339.

It belongs to the peptidase M24A family. Methionine aminopeptidase eukaryotic type 2 subfamily. The cofactor is Co(2+). Zn(2+) serves as cofactor. Requires Mn(2+) as cofactor. Fe(2+) is required as a cofactor.

It localises to the cytoplasm. It carries out the reaction Release of N-terminal amino acids, preferentially methionine, from peptides and arylamides.. Functionally, cotranslationally removes the N-terminal methionine from nascent proteins. The N-terminal methionine is often cleaved when the second residue in the primary sequence is small and uncharged (Met-Ala-, Cys, Gly, Pro, Ser, Thr, or Val). This is Methionine aminopeptidase 2 from Laccaria bicolor (strain S238N-H82 / ATCC MYA-4686) (Bicoloured deceiver).